We begin with the raw amino-acid sequence, 504 residues long: ATP synthase subunit alpha, chloroplastic (504 aa).

170–177 provides a ligand contact to ATP; it reads GDRQTGKT.

The protein belongs to the ATPase alpha/beta chains family. F-type ATPases have 2 components, CF(1) - the catalytic core - and CF(0) - the membrane proton channel. CF(1) has five subunits: alpha(3), beta(3), gamma(1), delta(1), epsilon(1). CF(0) has four main subunits: a, b, b' and c.

The protein resides in the plastid. It is found in the chloroplast thylakoid membrane. It catalyses the reaction ATP + H2O + 4 H(+)(in) = ADP + phosphate + 5 H(+)(out). Its function is as follows. Produces ATP from ADP in the presence of a proton gradient across the membrane. The alpha chain is a regulatory subunit. The sequence is that of ATP synthase subunit alpha, chloroplastic from Cyanidium caldarium (Red alga).